Here is a 130-residue protein sequence, read N- to C-terminus: Small ribosomal subunit protein uS8 (130 aa).

This sequence belongs to the universal ribosomal protein uS8 family. Part of the 30S ribosomal subunit. Contacts proteins S5 and S12.

Functionally, one of the primary rRNA binding proteins, it binds directly to 16S rRNA central domain where it helps coordinate assembly of the platform of the 30S subunit. This is Small ribosomal subunit protein uS8 from Pseudomonas fluorescens (strain SBW25).